We begin with the raw amino-acid sequence, 305 residues long: GMP synthase [glutamine-hydrolyzing] subunit B (305 aa).

The region spanning 2 to 184 (VKPEKFIPKA…LKLPDEICER (183 aa)) is the GMPS ATP-PPase domain. Residue 29–35 (SGGVDSS) participates in ATP binding.

Heterodimer composed of a glutamine amidotransferase subunit (A) and a GMP-binding subunit (B).

The enzyme catalyses XMP + L-glutamine + ATP + H2O = GMP + L-glutamate + AMP + diphosphate + 2 H(+). It functions in the pathway purine metabolism; GMP biosynthesis; GMP from XMP (L-Gln route): step 1/1. Functionally, catalyzes the synthesis of GMP from XMP. The sequence is that of GMP synthase [glutamine-hydrolyzing] subunit B from Methanosarcina barkeri (strain Fusaro / DSM 804).